Consider the following 247-residue polypeptide: Large ribosomal subunit protein uL3 (247 aa).

Disordered regions lie at residues 140–164 (SHRS…KMPG) and 212–247 (LPKE…KEGA). At Q151 the chain carries N5-methylglutamine. Positions 232–247 (DEDKAPADTPAEKEGA) are enriched in basic and acidic residues.

Belongs to the universal ribosomal protein uL3 family. Part of the 50S ribosomal subunit. Forms a cluster with proteins L14 and L19. Post-translationally, methylated by PrmB.

Its function is as follows. One of the primary rRNA binding proteins, it binds directly near the 3'-end of the 23S rRNA, where it nucleates assembly of the 50S subunit. This Nitrobacter winogradskyi (strain ATCC 25391 / DSM 10237 / CIP 104748 / NCIMB 11846 / Nb-255) protein is Large ribosomal subunit protein uL3.